Here is a 277-residue protein sequence, read N- to C-terminus: Thiazole synthase (277 aa).

The active-site Schiff-base intermediate with DXP is the Lys107. 1-deoxy-D-xylulose 5-phosphate is bound by residues Gly168, 194-195 (AG), and 216-217 (AS).

The protein belongs to the ThiG family. In terms of assembly, homotetramer. Forms heterodimers with either ThiH or ThiS.

It is found in the cytoplasm. The enzyme catalyses [ThiS sulfur-carrier protein]-C-terminal-Gly-aminoethanethioate + 2-iminoacetate + 1-deoxy-D-xylulose 5-phosphate = [ThiS sulfur-carrier protein]-C-terminal Gly-Gly + 2-[(2R,5Z)-2-carboxy-4-methylthiazol-5(2H)-ylidene]ethyl phosphate + 2 H2O + H(+). The protein operates within cofactor biosynthesis; thiamine diphosphate biosynthesis. Its function is as follows. Catalyzes the rearrangement of 1-deoxy-D-xylulose 5-phosphate (DXP) to produce the thiazole phosphate moiety of thiamine. Sulfur is provided by the thiocarboxylate moiety of the carrier protein ThiS. In vitro, sulfur can be provided by H(2)S. This chain is Thiazole synthase, found in Cutibacterium acnes (strain DSM 16379 / KPA171202) (Propionibacterium acnes).